Reading from the N-terminus, the 391-residue chain is ATP phosphoribosyltransferase regulatory subunit (391 aa).

The protein belongs to the class-II aminoacyl-tRNA synthetase family. HisZ subfamily. As to quaternary structure, heteromultimer composed of HisG and HisZ subunits.

The protein resides in the cytoplasm. Its pathway is amino-acid biosynthesis; L-histidine biosynthesis; L-histidine from 5-phospho-alpha-D-ribose 1-diphosphate: step 1/9. Required for the first step of histidine biosynthesis. May allow the feedback regulation of ATP phosphoribosyltransferase activity by histidine. This is ATP phosphoribosyltransferase regulatory subunit from Prochlorococcus marinus (strain SARG / CCMP1375 / SS120).